A 454-amino-acid chain; its full sequence is tRNA modification GTPase MnmE (454 aa).

The (6S)-5-formyl-5,6,7,8-tetrahydrofolate site is built by Arg23, Glu80, and Lys120. The TrmE-type G domain maps to 216–377 (GMKVVIAGRP…LRNHLKQSMG (162 aa)). A K(+)-binding site is contributed by Asn226. GTP is bound by residues 226 to 231 (NAGKSS), 245 to 251 (TDIAGTT), 270 to 273 (DTAG), 335 to 338 (NKAD), and 358 to 360 (SAR). Ser230 is a binding site for Mg(2+). The K(+) site is built by Thr245, Ile247, and Thr250. Thr251 is a Mg(2+) binding site. Lys454 provides a ligand contact to (6S)-5-formyl-5,6,7,8-tetrahydrofolate.

It belongs to the TRAFAC class TrmE-Era-EngA-EngB-Septin-like GTPase superfamily. TrmE GTPase family. Homodimer. Heterotetramer of two MnmE and two MnmG subunits. It depends on K(+) as a cofactor.

Its subcellular location is the cytoplasm. Its function is as follows. Exhibits a very high intrinsic GTPase hydrolysis rate. Involved in the addition of a carboxymethylaminomethyl (cmnm) group at the wobble position (U34) of certain tRNAs, forming tRNA-cmnm(5)s(2)U34. This chain is tRNA modification GTPase MnmE, found in Klebsiella pneumoniae subsp. pneumoniae (strain ATCC 700721 / MGH 78578).